The following is a 297-amino-acid chain: MRIAVIGAGKWGSALHLALKENHTCFISSLHQRDLEDFVSIKEALECEYLIFALSSQGMRVWLKENFINKGQKILIASKGIEDQSCQFLDEIFLDFVPKENFCVLSGPSFAAEVMQKLPTALMISGINQELCKKFASFFPDFIKTYIDDDVRGAEICGAYKNVLAIASGISDGLKLGNNARAALISRGLIEMHRFGKFFGAKEETFLGLGGAGDLFLTATSVLSRNYRVGLKLAQNQKLDSILAELNEVAEGVKTAYAIEKLAKMKGIYTPIVNEVVAIFKGKSVQEATQNLLKQND.

Trp11, Arg33, and Lys79 together coordinate NADPH. Sn-glycerol 3-phosphate is bound by residues Lys79, Gly107, and Ser109. Ala111 lines the NADPH pocket. 5 residues coordinate sn-glycerol 3-phosphate: Lys161, Asp214, Ser224, Arg225, and Asn226. Lys161 (proton acceptor) is an active-site residue. Position 225 (Arg225) interacts with NADPH. NADPH is bound by residues Val249 and Glu251.

It belongs to the NAD-dependent glycerol-3-phosphate dehydrogenase family.

Its subcellular location is the cytoplasm. The enzyme catalyses sn-glycerol 3-phosphate + NAD(+) = dihydroxyacetone phosphate + NADH + H(+). The catalysed reaction is sn-glycerol 3-phosphate + NADP(+) = dihydroxyacetone phosphate + NADPH + H(+). It functions in the pathway membrane lipid metabolism; glycerophospholipid metabolism. Functionally, catalyzes the reduction of the glycolytic intermediate dihydroxyacetone phosphate (DHAP) to sn-glycerol 3-phosphate (G3P), the key precursor for phospholipid synthesis. In Campylobacter jejuni subsp. doylei (strain ATCC BAA-1458 / RM4099 / 269.97), this protein is Glycerol-3-phosphate dehydrogenase [NAD(P)+].